The sequence spans 191 residues: Calcium-binding protein CML42 (191 aa).

EF-hand domains lie at 25-60, 116-151, and 154-189; these read LNALRLQRIFDLFDKNGDGFITVEELSQALTRLGLN, ENESDLAEAFKVFDENGDGFISARELQTVLKKLGLP, and GEMERVEKMIVSVDRNQDGRVDFFEFKNMMRTVVIP. Residues Asp-38, Asn-40, Asp-42, Glu-49, Asp-129, Asn-131, Asp-133, Glu-140, Asp-167, Asn-169, Asp-171, Arg-173, and Glu-178 each coordinate Ca(2+).

As to quaternary structure, interacts with KIC. In terms of tissue distribution, expressed in seedling shoots, roots, rosette leaves and flowers. Expressed in the leaf trichome support cells.

Functionally, probable calcium sensor that binds calcium in vitro. Involved in the regulation of trichome branching. The chain is Calcium-binding protein CML42 (CML42) from Arabidopsis thaliana (Mouse-ear cress).